A 267-amino-acid polypeptide reads, in one-letter code: Beta-lactamase OXA-5 (267 aa).

The first 19 residues, 1-19 (MKTIAAYLVLVFYASTALS), serve as a signal peptide directing secretion. The Acyl-ester intermediate role is filled by Ser67. Position 70 is an N6-carboxylysine (Lys70). Residue 205–207 (KTG) participates in substrate binding.

This sequence belongs to the class-D beta-lactamase family.

It carries out the reaction a beta-lactam + H2O = a substituted beta-amino acid. Its activity is regulated as follows. Inhibited by clavulanic acid. In terms of biological role, hydrolyzes both oxacillin and methicillin. The protein is Beta-lactamase OXA-5 (bla) of Pseudomonas aeruginosa.